The chain runs to 291 residues: UTP--glucose-1-phosphate uridylyltransferase (291 aa).

Belongs to the UDPGP type 2 family.

The catalysed reaction is alpha-D-glucose 1-phosphate + UTP + H(+) = UDP-alpha-D-glucose + diphosphate. In terms of biological role, may play a role in stationary phase survival. The chain is UTP--glucose-1-phosphate uridylyltransferase (galU) from Mycoplasma pneumoniae (strain ATCC 29342 / M129 / Subtype 1) (Mycoplasmoides pneumoniae).